A 496-amino-acid polypeptide reads, in one-letter code: Chaperone SurA (496 aa).

Positions 1–42 (MACKSTAVRSATRVAPTRRLGMVTGALVALMAGAALLPAAHA) are cleaved as a signal peptide. The interval 53 to 80 (RGIFTTPDASPSQPLLRGTLPGPSTASG) is disordered. PpiC domains follow at residues 235–337 (VQEY…KLVD) and 349–447 (VAQT…QVEG).

The protein resides in the periplasm. It carries out the reaction [protein]-peptidylproline (omega=180) = [protein]-peptidylproline (omega=0). In terms of biological role, chaperone involved in the correct folding and assembly of outer membrane proteins. Recognizes specific patterns of aromatic residues and the orientation of their side chains, which are found more frequently in integral outer membrane proteins. May act in both early periplasmic and late outer membrane-associated steps of protein maturation. The sequence is that of Chaperone SurA from Ralstonia nicotianae (strain ATCC BAA-1114 / GMI1000) (Ralstonia solanacearum).